Here is a 338-residue protein sequence, read N- to C-terminus: uncharacterized protein (338 aa).

The disordered stretch occupies residues 1–20; that stretch reads MYNNNQNHHNNDNNMNKDEP. Positions 9-20 are enriched in basic and acidic residues; the sequence is HNNDNNMNKDEP. Residues asparagine 37, asparagine 83, asparagine 97, asparagine 105, asparagine 114, and asparagine 122 are each glycosylated (N-linked (GlcNAc...) asparagine). The disordered stretch occupies residues 55–92; it reads VNSGNNNNNNNNNNNNNNNNNNNNNNNNNDSIVINMDT. Residues 59–92 are compositionally biased toward low complexity; sequence NNNNNNNNNNNNNNNNNNNNNNNNNDSIVINMDT. Helical transmembrane passes span 148–168, 178–198, and 202–222; these read YKKF…IVLI, FHAY…FLLI, and ILSI…FLKV. N-linked (GlcNAc...) asparagine glycans are attached at residues asparagine 229, asparagine 240, asparagine 286, asparagine 302, asparagine 317, and asparagine 322. Disordered stretches follow at residues 279–303 and 316–338; these read SNLN…NSNS and LNSS…TNEE. Residues 280–294 are compositionally biased toward low complexity; it reads NLNRNNNNSNNVNNN. Over residues 316 to 327 the composition is skewed to low complexity; it reads LNSSGSNSSIYS. Residues 328 to 338 show a composition bias toward polar residues; it reads DVQNDIGTNEE.

It localises to the membrane. This is an uncharacterized protein from Dictyostelium discoideum (Social amoeba).